Consider the following 265-residue polypeptide: Probable ribose-5-phosphate isomerase 2 (265 aa).

Ala-2 is modified (N-acetylalanine). Ser-96 carries the phosphoserine modification.

Belongs to the ribose 5-phosphate isomerase family.

It is found in the cytoplasm. The catalysed reaction is aldehydo-D-ribose 5-phosphate = D-ribulose 5-phosphate. The protein operates within carbohydrate degradation; pentose phosphate pathway; D-ribose 5-phosphate from D-ribulose 5-phosphate (non-oxidative stage): step 1/1. Its function is as follows. Catalyzes the reversible conversion of ribose-5-phosphate to ribulose 5-phosphate. The protein is Probable ribose-5-phosphate isomerase 2 (RPI2) of Arabidopsis thaliana (Mouse-ear cress).